We begin with the raw amino-acid sequence, 252 residues long: Triosephosphate isomerase (252 aa).

10 to 12 (NWK) serves as a coordination point for substrate. H96 (electrophile) is an active-site residue. The active-site Proton acceptor is the E168. Residues G174, S214, and 235–236 (GG) contribute to the substrate site.

Belongs to the triosephosphate isomerase family. As to quaternary structure, homodimer.

Its subcellular location is the cytoplasm. The enzyme catalyses D-glyceraldehyde 3-phosphate = dihydroxyacetone phosphate. The protein operates within carbohydrate biosynthesis; gluconeogenesis. It functions in the pathway carbohydrate degradation; glycolysis; D-glyceraldehyde 3-phosphate from glycerone phosphate: step 1/1. Seems to be capable of enhancing bacteriocin synthesis. In terms of biological role, involved in the gluconeogenesis. Catalyzes stereospecifically the conversion of dihydroxyacetone phosphate (DHAP) to D-glyceraldehyde-3-phosphate (G3P). The protein is Triosephosphate isomerase of Lactobacillus delbrueckii subsp. lactis.